We begin with the raw amino-acid sequence, 259 residues long: Tryptophan synthase alpha chain (259 aa).

Residues glutamate 52 and aspartate 63 each act as proton acceptor in the active site.

Belongs to the TrpA family. In terms of assembly, tetramer of two alpha and two beta chains.

The catalysed reaction is (1S,2R)-1-C-(indol-3-yl)glycerol 3-phosphate + L-serine = D-glyceraldehyde 3-phosphate + L-tryptophan + H2O. It functions in the pathway amino-acid biosynthesis; L-tryptophan biosynthesis; L-tryptophan from chorismate: step 5/5. Functionally, the alpha subunit is responsible for the aldol cleavage of indoleglycerol phosphate to indole and glyceraldehyde 3-phosphate. In Streptococcus gordonii (strain Challis / ATCC 35105 / BCRC 15272 / CH1 / DL1 / V288), this protein is Tryptophan synthase alpha chain.